A 1244-amino-acid chain; its full sequence is Alpha-protein kinase 1 (1244 aa).

ADP-D-glycero-beta-D-manno-heptose is bound by residues Phe61, Gln67, Arg116, 150–153 (RQAR), Asp231, Lys233, 236–237 (ST), and Phe295. Disordered regions lie at residues 650–675 (LQEP…TPFS), 701–737 (VRNM…THPS), 757–798 (VKDR…TEDA), and 824–848 (NWPV…DPDA). Residues 652 to 675 (EPNNDNLEPSQNQPQQQMPLTPFS) are compositionally biased toward polar residues. Residues 713 to 726 (SRPSYRSASWSSDS) are compositionally biased toward low complexity. Residues 757-771 (VKDRQGKEQGEEISE) are compositionally biased toward basic and acidic residues. Positions 787-798 (PEGETAESTEDA) are enriched in acidic residues. The 221-residue stretch at 1017-1237 (KYSKKSELWT…ICHRLSLTRP (221 aa)) folds into the Alpha-type protein kinase domain.

This sequence belongs to the protein kinase superfamily. Alpha-type protein kinase family. ALPK subfamily. As to expression, highly expressed in liver. Expressed in the optic nerve and retinal pigmented epithelium. Lower expression is observed in the macula and extramacular retina.

The protein resides in the cytoplasm. Its subcellular location is the cytosol. It is found in the cytoskeleton. The protein localises to the spindle pole. It localises to the microtubule organizing center. The protein resides in the centrosome. Its subcellular location is the cell projection. It is found in the cilium. The catalysed reaction is L-seryl-[protein] + ATP = O-phospho-L-seryl-[protein] + ADP + H(+). The enzyme catalyses L-threonyl-[protein] + ATP = O-phospho-L-threonyl-[protein] + ADP + H(+). With respect to regulation, serine/threonine-protein kinase activity is stimulated upon ADP-D-glycero-beta-D-manno-heptose (ADP-Heptose)-binding. Serine/threonine-protein kinase that detects bacterial pathogen-associated molecular pattern metabolites (PAMPs) and initiates an innate immune response, a critical step for pathogen elimination and engagement of adaptive immunity. Specifically recognizes and binds ADP-D-glycero-beta-D-manno-heptose (ADP-Heptose), a potent PAMP present in all Gram-negative and some Gram-positive bacteria. ADP-Heptose-binding stimulates its kinase activity to phosphorylate and activate TIFA, triggering pro-inflammatory NF-kappa-B signaling. May be involved in monosodium urate monohydrate (MSU)-induced inflammation by mediating phosphorylation of unconventional myosin MYO9A. May also play a role in apical protein transport by mediating phosphorylation of unconventional myosin MYO1A. May play a role in ciliogenesis. This is Alpha-protein kinase 1 from Homo sapiens (Human).